A 417-amino-acid chain; its full sequence is D-galactonate dehydratase family member SeV_A0456 (417 aa).

Positions 43 and 127 each coordinate substrate. Y158 functions as the Proton donor/acceptor in the catalytic mechanism. Mg(2+) is bound at residue D223. H225 acts as the Proton donor/acceptor in catalysis. Positions 249 and 275 each coordinate Mg(2+). E275, R296, H325, D329, and E352 together coordinate substrate.

It belongs to the mandelate racemase/muconate lactonizing enzyme family. GalD subfamily. Mg(2+) is required as a cofactor.

It catalyses the reaction D-gluconate = 2-dehydro-3-deoxy-D-gluconate + H2O. Functionally, has low D-gluconate dehydratase activity (in vitro), suggesting that it has no significant role in D-gluconate degradation in vivo. Has no detectable activity with a panel of 70 other acid sugars (in vitro). The sequence is that of D-galactonate dehydratase family member SeV_A0456 from Salmonella virchow (strain SL491).